The primary structure comprises 300 residues: 33 kDa chaperonin (300 aa).

Disulfide bonds link C235/C237 and C269/C272.

It belongs to the HSP33 family. Post-translationally, under oxidizing conditions two disulfide bonds are formed involving the reactive cysteines. Under reducing conditions zinc is bound to the reactive cysteines and the protein is inactive.

The protein resides in the cytoplasm. Its function is as follows. Redox regulated molecular chaperone. Protects both thermally unfolding and oxidatively damaged proteins from irreversible aggregation. Plays an important role in the bacterial defense system toward oxidative stress. This is 33 kDa chaperonin from Pseudomonas fluorescens (strain Pf0-1).